A 219-amino-acid polypeptide reads, in one-letter code: 7-cyano-7-deazaguanine synthase (219 aa).

10 to 20 (FSGGQDSTTCL) provides a ligand contact to ATP. The Zn(2+) site is built by cysteine 188, cysteine 196, cysteine 199, and cysteine 202.

This sequence belongs to the QueC family. Zn(2+) is required as a cofactor.

It catalyses the reaction 7-carboxy-7-deazaguanine + NH4(+) + ATP = 7-cyano-7-deazaguanine + ADP + phosphate + H2O + H(+). It participates in purine metabolism; 7-cyano-7-deazaguanine biosynthesis. Catalyzes the ATP-dependent conversion of 7-carboxy-7-deazaguanine (CDG) to 7-cyano-7-deazaguanine (preQ(0)). The protein is 7-cyano-7-deazaguanine synthase of Neisseria meningitidis serogroup A / serotype 4A (strain DSM 15465 / Z2491).